A 518-amino-acid chain; its full sequence is Sensor protein kinase HptS (518 aa).

2 consecutive transmembrane segments (helical) span residues 20-40 (IFPV…IYIW) and 222-242 (GITL…FGFI). In terms of domain architecture, Histidine kinase spans 297 to 513 (EQLIHSIEHT…LICYKIPLSR (217 aa)). Position 325 is a phosphohistidine; by autocatalysis (histidine 325).

Autophosphorylated.

It is found in the cell membrane. The catalysed reaction is ATP + protein L-histidine = ADP + protein N-phospho-L-histidine.. Functionally, member of the two-component regulatory system HptS/HptR that regulates genes involved in hexose phosphate transport system in response to changes in extracellular phosphate sources. May act as a sensor protein kinase which is autophosphorylated at a histidine residue and transfers its phosphate group to the conserved aspartic acid residue in the regulatory domain of HptS. In turn, HptS antagonizes CcpA-dependent transcription of a subset of CcpA-regulated genes involved in antibiotic susceptibility. The protein is Sensor protein kinase HptS (hptS) of Staphylococcus aureus (strain USA300).